Reading from the N-terminus, the 883-residue chain is Alanine--tRNA ligase (883 aa).

H562, H566, C675, and H679 together coordinate Zn(2+).

It belongs to the class-II aminoacyl-tRNA synthetase family. It depends on Zn(2+) as a cofactor.

The protein resides in the cytoplasm. The catalysed reaction is tRNA(Ala) + L-alanine + ATP = L-alanyl-tRNA(Ala) + AMP + diphosphate. In terms of biological role, catalyzes the attachment of alanine to tRNA(Ala) in a two-step reaction: alanine is first activated by ATP to form Ala-AMP and then transferred to the acceptor end of tRNA(Ala). Also edits incorrectly charged Ser-tRNA(Ala) and Gly-tRNA(Ala) via its editing domain. The chain is Alanine--tRNA ligase from Ruegeria sp. (strain TM1040) (Silicibacter sp.).